We begin with the raw amino-acid sequence, 862 residues long: AP-1 complex subunit gamma-2 (862 aa).

11 HEAT repeats span residues 1–28 (MNPF…EERA), 29–65 (VVRK…LGYP), 101–136 (EVLM…CSAE), 137–173 (MARD…KVPD), 308–345 (GLRV…VDSQ), 346–382 (AVQR…ENNV), 384–417 (PLAK…KFAP), 418–454 (EKIW…NAPD), 458–496 (YTVR…NNAG), 507–545 (TESD…RFPS), and 560–599 (SFVL…ATFS). Residues 744–859 (AAYPSIVAFE…LEEGQINNFP (116 aa)) enclose the GAE domain.

This sequence belongs to the adaptor complexes large subunit family. In terms of assembly, adaptor protein complex 1 (AP-1) is a heterotetramer composed of two large adaptins (gamma-type subunit and beta-type subunit), a medium adaptin (mu-type subunit) and a small adaptin (sigma-type subunit).

It localises to the golgi apparatus. The protein localises to the cytoplasmic vesicle. It is found in the clathrin-coated vesicle membrane. Subunit of clathrin-associated adaptor protein complex 1 that plays a role in protein sorting at the trans-Golgi network and early endosomes (TGN/EE). The AP complexes mediate both the recruitment of clathrin to membranes and the recognition of sorting signals within the cytosolic tails of transmembrane cargo molecules. In Arabidopsis thaliana (Mouse-ear cress), this protein is AP-1 complex subunit gamma-2.